Consider the following 222-residue polypeptide: Small ribosomal subunit protein eS1 (222 aa).

Belongs to the eukaryotic ribosomal protein eS1 family.

The polypeptide is Small ribosomal subunit protein eS1 (Pyrobaculum calidifontis (strain DSM 21063 / JCM 11548 / VA1)).